The following is a 403-amino-acid chain: Na(+)-translocating NADH-quinone reductase subunit B (403 aa).

The next 9 helical transmembrane spans lie at 56 to 76 (MMIT…WNTG), 121 to 141 (AYFL…EVLF), 163 to 183 (ILPP…GVVI), 220 to 240 (WTAV…AGGI), 258 to 278 (IHGS…AVLI), 287 to 307 (IVTG…LIGS), 312 to 332 (LFGM…GMIF), 348 to 368 (WVFG…NPAF), and 371 to 391 (GMML…HFVI). Residue Thr230 is modified to FMN phosphoryl threonine.

Belongs to the NqrB/RnfD family. As to quaternary structure, composed of six subunits; NqrA, NqrB, NqrC, NqrD, NqrE and NqrF. The cofactor is FMN.

The protein localises to the cell inner membrane. It carries out the reaction a ubiquinone + n Na(+)(in) + NADH + H(+) = a ubiquinol + n Na(+)(out) + NAD(+). Its function is as follows. NQR complex catalyzes the reduction of ubiquinone-1 to ubiquinol by two successive reactions, coupled with the transport of Na(+) ions from the cytoplasm to the periplasm. NqrA to NqrE are probably involved in the second step, the conversion of ubisemiquinone to ubiquinol. This Stutzerimonas stutzeri (strain A1501) (Pseudomonas stutzeri) protein is Na(+)-translocating NADH-quinone reductase subunit B.